We begin with the raw amino-acid sequence, 86 residues long: Large ribosomal subunit protein bL27 (86 aa).

The segment at Met1–Phe26 is disordered.

The protein belongs to the bacterial ribosomal protein bL27 family.

This is Large ribosomal subunit protein bL27 from Bdellovibrio bacteriovorus (strain ATCC 15356 / DSM 50701 / NCIMB 9529 / HD100).